The sequence spans 307 residues: Voltage-dependent anion channel-forming protein sll1024 (307 aa).

Transmembrane regions (helical) follow at residues Val-26–Leu-46, Phe-54–Phe-74, Leu-226–Thr-246, and Ala-247–Ile-267.

The protein belongs to the anion channel-forming bestrophin (TC 1.A.46) family.

Its subcellular location is the cell membrane. The polypeptide is Voltage-dependent anion channel-forming protein sll1024 (Synechocystis sp. (strain ATCC 27184 / PCC 6803 / Kazusa)).